The primary structure comprises 574 residues: Cholinesterase (574 aa).

N-linked (GlcNAc...) asparagine glycosylation occurs at N57. The cysteines at positions 65 and 92 are disulfide-linked. N106 is a glycosylation site (N-linked (GlcNAc...) asparagine). 116–117 is a binding site for substrate; the sequence is GG. S198 serves as the catalytic Acyl-ester intermediate. Phosphoserine is present on S198. N-linked (GlcNAc...) asparagine glycans are attached at residues N241 and N256. C252 and C263 form a disulfide bridge. The active-site Charge relay system is E325. An N-linked (GlcNAc...) asparagine glycan is attached at N341. C400 and C519 are oxidised to a cystine. The active-site Charge relay system is H438. 3 N-linked (GlcNAc...) asparagine glycosylation sites follow: N455, N481, and N486.

Belongs to the type-B carboxylesterase/lipase family. Homotetramer; disulfide-linked. Dimer of dimers. Detected in blood plasma (at protein level). Present in most cells except erythrocytes.

The protein resides in the secreted. It catalyses the reaction an acylcholine + H2O = a carboxylate + choline + H(+). Functionally, esterase with broad substrate specificity. Contributes to the inactivation of the neurotransmitter acetylcholine. Can degrade neurotoxic organophosphate esters. The protein is Cholinesterase (BCHE) of Equus caballus (Horse).